A 367-amino-acid polypeptide reads, in one-letter code: tRNA(Ile)-lysidine synthase (367 aa).

32-37 (SGGSDS) is a binding site for ATP.

The protein belongs to the tRNA(Ile)-lysidine synthase family.

Its subcellular location is the cytoplasm. It carries out the reaction cytidine(34) in tRNA(Ile2) + L-lysine + ATP = lysidine(34) in tRNA(Ile2) + AMP + diphosphate + H(+). In terms of biological role, ligates lysine onto the cytidine present at position 34 of the AUA codon-specific tRNA(Ile) that contains the anticodon CAU, in an ATP-dependent manner. Cytidine is converted to lysidine, thus changing the amino acid specificity of the tRNA from methionine to isoleucine. This is tRNA(Ile)-lysidine synthase from Hyphomonas neptunium (strain ATCC 15444).